The following is a 316-amino-acid chain: Pantothenate kinase (316 aa).

95–102 (GSVAVGKS) contacts ATP.

It belongs to the prokaryotic pantothenate kinase family.

The protein localises to the cytoplasm. The enzyme catalyses (R)-pantothenate + ATP = (R)-4'-phosphopantothenate + ADP + H(+). It functions in the pathway cofactor biosynthesis; coenzyme A biosynthesis; CoA from (R)-pantothenate: step 1/5. This chain is Pantothenate kinase, found in Escherichia coli O17:K52:H18 (strain UMN026 / ExPEC).